The chain runs to 328 residues: E3 ubiquitin-protein ligase RING1-like (328 aa).

N-acetylserine is present on serine 2. The RING-type; atypical zinc-finger motif lies at 216–257; it reads CAVCMDEFEDGSDVKQMPCKHVFHQDCLLPWLELHNSCPVCR. Positions 264–328 are disordered; that stretch reads DPDYENRSQG…NLETRGEDLD (65 aa). A compositionally biased stretch (gly residues) spans 306–319; the sequence is SGSGSGAPGTGGGN.

Post-translationally, auto-ubiquitinated as part of the enzymatic reaction. In terms of tissue distribution, expressed in leaves, roots, trichomes, stipules, and also in anthers and stigma of flowers.

The catalysed reaction is S-ubiquitinyl-[E2 ubiquitin-conjugating enzyme]-L-cysteine + [acceptor protein]-L-lysine = [E2 ubiquitin-conjugating enzyme]-L-cysteine + N(6)-ubiquitinyl-[acceptor protein]-L-lysine.. It participates in protein modification; protein ubiquitination. Functionally, E3 ubiquitin-protein ligase which accepts ubiquitin from an E2 ubiquitin-conjugating enzyme in the form of a thioester and then directly transfers the ubiquitin to targeted substrates. Promotes polyubiquitination of target proteins. The sequence is that of E3 ubiquitin-protein ligase RING1-like from Arabidopsis thaliana (Mouse-ear cress).